The following is a 149-amino-acid chain: UPF0251 protein Moth_1655 (149 aa).

The tract at residues 129–149 (AGRGPGRGRCHRHGRFGEGEH) is disordered.

The protein belongs to the UPF0251 family.

In Moorella thermoacetica (strain ATCC 39073 / JCM 9320), this protein is UPF0251 protein Moth_1655.